A 48-amino-acid chain; its full sequence is Large ribosomal subunit protein bL33 (48 aa).

This sequence belongs to the bacterial ribosomal protein bL33 family.

The sequence is that of Large ribosomal subunit protein bL33 from Streptococcus mutans serotype c (strain ATCC 700610 / UA159).